A 297-amino-acid polypeptide reads, in one-letter code: 4-diphosphocytidyl-2-C-methyl-D-erythritol kinase (297 aa).

Residue K10 is part of the active site. 95–105 (PVAGGMAGGSA) contributes to the ATP binding site. The active site involves D137.

It belongs to the GHMP kinase family. IspE subfamily.

The enzyme catalyses 4-CDP-2-C-methyl-D-erythritol + ATP = 4-CDP-2-C-methyl-D-erythritol 2-phosphate + ADP + H(+). It participates in isoprenoid biosynthesis; isopentenyl diphosphate biosynthesis via DXP pathway; isopentenyl diphosphate from 1-deoxy-D-xylulose 5-phosphate: step 3/6. Functionally, catalyzes the phosphorylation of the position 2 hydroxy group of 4-diphosphocytidyl-2C-methyl-D-erythritol. The polypeptide is 4-diphosphocytidyl-2-C-methyl-D-erythritol kinase (Streptomyces avermitilis (strain ATCC 31267 / DSM 46492 / JCM 5070 / NBRC 14893 / NCIMB 12804 / NRRL 8165 / MA-4680)).